Reading from the N-terminus, the 490-residue chain is Phosphoglucosamine mutase (490 aa).

Residue Ser-139 is the Phosphoserine intermediate of the active site. Mg(2+) is bound by residues Ser-139, Asp-279, Asp-281, and Asp-283. Ser-139 is modified (phosphoserine).

It belongs to the phosphohexose mutase family. The cofactor is Mg(2+). Activated by phosphorylation.

It catalyses the reaction alpha-D-glucosamine 1-phosphate = D-glucosamine 6-phosphate. Its function is as follows. Catalyzes the conversion of glucosamine-6-phosphate to glucosamine-1-phosphate. This Nostoc punctiforme (strain ATCC 29133 / PCC 73102) protein is Phosphoglucosamine mutase.